Here is a 440-residue protein sequence, read N- to C-terminus: NADH-quinone oxidoreductase subunit D 1 (440 aa).

The protein belongs to the complex I 49 kDa subunit family. As to quaternary structure, NDH-1 is composed of 14 different subunits. Subunits NuoB, C, D, E, F, and G constitute the peripheral sector of the complex.

The protein localises to the cell membrane. The enzyme catalyses a quinone + NADH + 5 H(+)(in) = a quinol + NAD(+) + 4 H(+)(out). In terms of biological role, NDH-1 shuttles electrons from NADH, via FMN and iron-sulfur (Fe-S) centers, to quinones in the respiratory chain. The immediate electron acceptor for the enzyme in this species is believed to be a menaquinone. Couples the redox reaction to proton translocation (for every two electrons transferred, four hydrogen ions are translocated across the cytoplasmic membrane), and thus conserves the redox energy in a proton gradient. The protein is NADH-quinone oxidoreductase subunit D 1 of Streptomyces griseus subsp. griseus (strain JCM 4626 / CBS 651.72 / NBRC 13350 / KCC S-0626 / ISP 5235).